The sequence spans 170 residues: ATP synthase subunit b (170 aa).

A helical transmembrane segment spans residues 22 to 44 (IINLAVVVFGLYKFLPGFLGKIL).

It belongs to the ATPase B chain family. As to quaternary structure, F-type ATPases have 2 components, F(1) - the catalytic core - and F(0) - the membrane proton channel. F(1) has five subunits: alpha(3), beta(3), gamma(1), delta(1), epsilon(1). F(0) has four main subunits: a(1), b(1), b'(1) and c(10-14). The alpha and beta chains form an alternating ring which encloses part of the gamma chain. F(1) is attached to F(0) by a central stalk formed by the gamma and epsilon chains, while a peripheral stalk is formed by the delta, b and b' chains.

The protein localises to the cellular thylakoid membrane. Functionally, f(1)F(0) ATP synthase produces ATP from ADP in the presence of a proton or sodium gradient. F-type ATPases consist of two structural domains, F(1) containing the extramembraneous catalytic core and F(0) containing the membrane proton channel, linked together by a central stalk and a peripheral stalk. During catalysis, ATP synthesis in the catalytic domain of F(1) is coupled via a rotary mechanism of the central stalk subunits to proton translocation. Component of the F(0) channel, it forms part of the peripheral stalk, linking F(1) to F(0). This chain is ATP synthase subunit b, found in Prochlorococcus marinus (strain NATL1A).